The sequence spans 137 residues: Putative pre-16S rRNA nuclease (137 aa).

Belongs to the YqgF nuclease family.

The protein resides in the cytoplasm. In terms of biological role, could be a nuclease involved in processing of the 5'-end of pre-16S rRNA. The protein is Putative pre-16S rRNA nuclease of Clostridium perfringens (strain ATCC 13124 / DSM 756 / JCM 1290 / NCIMB 6125 / NCTC 8237 / Type A).